The primary structure comprises 385 residues: MALMAVNTRCLCLFLLCTITGHSLEIKVNPPQDFEILDPGLLGYLYLQWKPPVVMDNFKECKLEYELKYRNVDSDSWKTIITRNLIYKDGFDLNKGIEGKIRTHLSEHCTNGSEVQSPWTEASYGIADEGSLGTKIQDMKCIYYNWQYLVCSWKPGKTVHSDTNYTMFFWYEGLDHALQCADYLQDNEKNVGCKLSNLDSSDYKDFFIRVNGSSKLEPIRSSYMVFQLQNIVKPLPPEFLHISVENSIDIRMKWSTPGGPIPPSCYTYEIVVREDDISWESATDKNDMKLKRRANESEDLCFFVRCKINIYCADDGIWSEWSEEECWEGYTGPDSKIVFIVPVCLFFIFLLLLLCLIVEKEDPEPTLSLHVDLNKEMYAYEETLC.

Positions 1-23 (MALMAVNTRCLCLFLLCTITGHS) are cleaved as a signal peptide. The Extracellular segment spans residues 24 to 336 (LEIKVNPPQD…WEGYTGPDSK (313 aa)). Fibronectin type-III domains are found at residues 30 to 130 (PPQD…ADEG), 133 to 221 (GTKI…PIRS), and 236 to 334 (PPEF…TGPD). Cys61 and Cys109 are oxidised to a cystine. An N-linked (GlcNAc...) asparagine glycan is attached at Asn111. The cysteines at positions 141 and 151 are disulfide-linked. Residue Asn164 is glycosylated (N-linked (GlcNAc...) asparagine). Cysteines 180 and 193 form a disulfide. Asn211 and Asn295 each carry an N-linked (GlcNAc...) asparagine glycan. A disulfide bridge links Cys265 with Cys312. Positions 318 to 322 (WSEWS) match the WSXWS motif motif. The helical transmembrane segment at 337-357 (IVFIVPVCLFFIFLLLLLCLI) threads the bilayer. Residues 358–385 (VEKEDPEPTLSLHVDLNKEMYAYEETLC) lie on the Cytoplasmic side of the membrane.

It belongs to the type I cytokine receptor family. Type 5 subfamily. As to quaternary structure, interacts with IL4RA. Interacts with high affinity to interleukin-13 (IL13), but not to interleukin-4 (IL4). Cleaved by MMP8 leading to a soluble form that is also able to interact with IL13.

It is found in the cell membrane. Its function is as follows. Cell surface receptor that plays a role in the regulation of IL-13-mediated responses. Functions as a decoy receptor that inhibits IL-13- and IL-4-mediated signal transduction via the JAK-STAT pathway and thereby modulates immune responses and inflammation. Serves as a functional signaling receptor for IL-13 in an alternative pathway involving AP-1 ultimately leading to the production of TGFB1. The sequence is that of Interleukin-13 receptor subunit alpha-2 (Il13ra2) from Rattus norvegicus (Rat).